The primary structure comprises 132 residues: MARLTVEECMGRTNNKFKLVILASQRAHDLNSGASPVVKHKNSKNTIIALTEIANEQLDVHLLFNLAVQRCRKYMEKFINSDDSYVVHKSKDNIDIFQKNATSNFDELGANSLNVENSKFLDGDNFFLTQKE.

Belongs to the RNA polymerase subunit omega family. The RNAP catalytic core consists of 2 alpha, 1 beta, 1 beta' and 1 omega subunit. When a sigma factor is associated with the core the holoenzyme is formed, which can initiate transcription.

The catalysed reaction is RNA(n) + a ribonucleoside 5'-triphosphate = RNA(n+1) + diphosphate. Functionally, promotes RNA polymerase assembly. Latches the N- and C-terminal regions of the beta' subunit thereby facilitating its interaction with the beta and alpha subunits. This Ehrlichia ruminantium (strain Welgevonden) protein is DNA-directed RNA polymerase subunit omega.